The following is a 454-amino-acid chain: Aquaporin-7 (454 aa).

Over 1 to 71 the chain is Cytoplasmic; sequence MNINEPRDGG…LHLHNKTRNH (71 aa). A helical membrane pass occupies residues 72-92; the sequence is FVATVAEFAGTTLFLFFAFSG. Topologically, residues 93–115 are extracellular; that stretch reads TQVALLATPANDSNVVGTPSNPA. N-linked (GlcNAc...) asparagine glycosylation is present at Asn103. Residues 116-136 form a helical membrane-spanning segment; that stretch reads QLLYVSLCFGFSLAVNAWVFF. Topologically, residues 137–163 are cytoplasmic; that stretch reads RISGGLFNPAVTMGMCIVGALPYFRGL. Positions 144–146 match the NPA 1 motif; sequence NPA. The chain crosses the membrane as a helical span at residues 164 to 184; it reads LLIFAQIIGGIAAAAIVSALF. Topologically, residues 185 to 202 are extracellular; that stretch reads PGPITFRTSLGGGTSIVQ. The chain crosses the membrane as a helical span at residues 203–223; that stretch reads GLFIEMFLTAELVFTIFMLAA. The Cytoplasmic segment spans residues 224-229; sequence EKHKGT. The chain crosses the membrane as a helical span at residues 230–250; that stretch reads FIAPIGIGLSLFIAELTGVYF. Residues 251–274 lie on the Extracellular side of the membrane; that stretch reads TGGSVNPARSFGPSVVSGQFTGYH. The NPA 2 motif lies at 256-258; the sequence is NPA. Residues 275 to 295 traverse the membrane as a helical segment; it reads WIYWVGPILGAILASAFYKFI. Over 296–454 the chain is Cytoplasmic; that stretch reads KMLEYETANP…ENLRDNTHNN (159 aa). The disordered stretch occupies residues 343–454; that stretch reads GASHVHENGN…ENLRDNTHNN (112 aa).

Belongs to the MIP/aquaporin (TC 1.A.8) family.

The protein resides in the membrane. It catalyses the reaction H2O(in) = H2O(out). Functionally, water channel required to facilitate the transport of water across membranes. Involved in conidiation. This Botryotinia fuckeliana (strain B05.10) (Noble rot fungus) protein is Aquaporin-7.